Consider the following 466-residue polypeptide: Glycylpeptide N-tetradecanoyltransferase (466 aa).

The tract at residues 1–21 (MDNENNKNTKNSQQDSSFSEG) is disordered. Over residues 8-19 (NTKNSQQDSSFS) the composition is skewed to polar residues. Serine 17 is modified (phosphoserine). Residues 51 to 54 (FKFW), 185 to 187 (LCI), and 193 to 197 (SKRLT) each bind tetradecanoyl-CoA. Isoleucine 466 serves as the catalytic Proton acceptor; via carboxylate.

It belongs to the NMT family. In terms of assembly, monomer.

It is found in the cytoplasm. The enzyme catalyses N-terminal glycyl-[protein] + tetradecanoyl-CoA = N-tetradecanoylglycyl-[protein] + CoA + H(+). In terms of biological role, adds a myristoyl group to the N-terminal glycine residue of certain cellular proteins. The sequence is that of Glycylpeptide N-tetradecanoyltransferase (nmt1) from Schizosaccharomyces pombe (strain 972 / ATCC 24843) (Fission yeast).